We begin with the raw amino-acid sequence, 126 residues long: Holo-[acyl-carrier-protein] synthase (126 aa).

Residues aspartate 9 and glutamate 58 each coordinate Mg(2+).

It belongs to the P-Pant transferase superfamily. AcpS family. The cofactor is Mg(2+).

The protein resides in the cytoplasm. The catalysed reaction is apo-[ACP] + CoA = holo-[ACP] + adenosine 3',5'-bisphosphate + H(+). Functionally, transfers the 4'-phosphopantetheine moiety from coenzyme A to a Ser of acyl-carrier-protein. The protein is Holo-[acyl-carrier-protein] synthase of Shewanella denitrificans (strain OS217 / ATCC BAA-1090 / DSM 15013).